A 237-amino-acid chain; its full sequence is ATP synthase subunit 4, mitochondrial (237 aa).

A mitochondrion-targeting transit peptide spans 1–30; the sequence is MFRALTLKASARPVVAGLCSRQAPIAAVRY.

Belongs to the eukaryotic ATPase B chain family.

It is found in the mitochondrion. Its subcellular location is the mitochondrion inner membrane. Functionally, mitochondrial membrane ATP synthase (F(1)F(0) ATP synthase or Complex V) produces ATP from ADP in the presence of a proton gradient across the membrane which is generated by electron transport complexes of the respiratory chain. F-type ATPases consist of two structural domains, F(1) - containing the extramembraneous catalytic core, and F(0) - containing the membrane proton channel, linked together by a central stalk and a peripheral stalk. During catalysis, ATP synthesis in the catalytic domain of F(1) is coupled via a rotary mechanism of the central stalk subunits to proton translocation. Part of the complex F(0) domain and the peripheric stalk, which acts as a stator to hold the catalytic alpha(3)beta(3) subcomplex and subunit a/ATP6 static relative to the rotary elements. The chain is ATP synthase subunit 4, mitochondrial (ATP4) from Kluyveromyces lactis (strain ATCC 8585 / CBS 2359 / DSM 70799 / NBRC 1267 / NRRL Y-1140 / WM37) (Yeast).